Reading from the N-terminus, the 395-residue chain is Putative pyridoxal phosphate-dependent acyltransferase (395 aa).

110-111 is a pyridoxal 5'-phosphate binding site; that stretch reads GF. H135 is a substrate binding site. Pyridoxal 5'-phosphate-binding positions include S185, 210 to 213, and 240 to 243; these read DDAH and TLSK. An N6-(pyridoxal phosphate)lysine modification is found at K243. Substrate is bound at residue T357.

The protein belongs to the class-II pyridoxal-phosphate-dependent aminotransferase family. As to quaternary structure, homodimer. Requires pyridoxal 5'-phosphate as cofactor.

The chain is Putative pyridoxal phosphate-dependent acyltransferase from Staphylococcus aureus (strain Mu50 / ATCC 700699).